The following is a 95-amino-acid chain: Small ribosomal subunit protein uS19 (95 aa).

Residues 76–95 (PTRRFGGHADKKAATKGQVR) are disordered.

This sequence belongs to the universal ribosomal protein uS19 family.

Its function is as follows. Protein S19 forms a complex with S13 that binds strongly to the 16S ribosomal RNA. The polypeptide is Small ribosomal subunit protein uS19 (Pseudothermotoga lettingae (strain ATCC BAA-301 / DSM 14385 / NBRC 107922 / TMO) (Thermotoga lettingae)).